The sequence spans 149 residues: D-aminoacyl-tRNA deacylase (149 aa).

The Gly-cisPro motif, important for rejection of L-amino acids motif lies at 139 to 140; sequence GP.

This sequence belongs to the DTD family. In terms of assembly, homodimer.

The protein localises to the cytoplasm. The enzyme catalyses glycyl-tRNA(Ala) + H2O = tRNA(Ala) + glycine + H(+). The catalysed reaction is a D-aminoacyl-tRNA + H2O = a tRNA + a D-alpha-amino acid + H(+). An aminoacyl-tRNA editing enzyme that deacylates mischarged D-aminoacyl-tRNAs. Also deacylates mischarged glycyl-tRNA(Ala), protecting cells against glycine mischarging by AlaRS. Acts via tRNA-based rather than protein-based catalysis; rejects L-amino acids rather than detecting D-amino acids in the active site. By recycling D-aminoacyl-tRNA to D-amino acids and free tRNA molecules, this enzyme counteracts the toxicity associated with the formation of D-aminoacyl-tRNA entities in vivo and helps enforce protein L-homochirality. The sequence is that of D-aminoacyl-tRNA deacylase (dtd1) from Schizosaccharomyces pombe (strain 972 / ATCC 24843) (Fission yeast).